The following is a 75-amino-acid chain: Small ribosomal subunit protein bS18 (75 aa).

The protein belongs to the bacterial ribosomal protein bS18 family. Part of the 30S ribosomal subunit. Forms a tight heterodimer with protein bS6.

Functionally, binds as a heterodimer with protein bS6 to the central domain of the 16S rRNA, where it helps stabilize the platform of the 30S subunit. The polypeptide is Small ribosomal subunit protein bS18 (Thermosipho melanesiensis (strain DSM 12029 / CIP 104789 / BI429)).